We begin with the raw amino-acid sequence, 407 residues long: Digeranylgeranylglycerophospholipid reductase (407 aa).

Positions 15, 34, 45, 46, 48, 99, 123, 281, 293, and 294 each coordinate FAD.

It belongs to the geranylgeranyl reductase family. DGGGPL reductase subfamily. FAD is required as a cofactor.

The enzyme catalyses a 2,3-bis-O-phytanyl-sn-glycerol 1-phospholipid + 8 oxidized 2[4Fe-4S]-[ferredoxin] = a 2,3-bis-O-(geranylgeranyl)-sn-glycerol 1-phospholipid + 8 reduced 2[4Fe-4S]-[ferredoxin] + 16 H(+). It catalyses the reaction 2,3-bis-O-(phytanyl)-sn-glycerol 1-phosphate + 8 oxidized 2[4Fe-4S]-[ferredoxin] = 2,3-bis-O-(geranylgeranyl)-sn-glycerol 1-phosphate + 8 reduced 2[4Fe-4S]-[ferredoxin] + 16 H(+). It carries out the reaction a 2,3-bis-O-phytanyl-sn-glycerol 1-phospholipid + 8 A = a 2,3-bis-O-(geranylgeranyl)-sn-glycerol 1-phospholipid + 8 AH2. The catalysed reaction is CDP-2,3-bis-O-(geranylgeranyl)-sn-glycerol + 8 AH2 = CDP-2,3-bis-O-(phytanyl)-sn-glycerol + 8 A. The enzyme catalyses archaetidylserine + 8 AH2 = 2,3-bis-O-phytanyl-sn-glycero-3-phospho-L-serine + 8 A. It functions in the pathway membrane lipid metabolism; glycerophospholipid metabolism. Functionally, is involved in the reduction of 2,3-digeranylgeranylglycerophospholipids (unsaturated archaeols) into 2,3-diphytanylglycerophospholipids (saturated archaeols) in the biosynthesis of archaeal membrane lipids. Catalyzes the formation of archaetidic acid (2,3-di-O-phytanyl-sn-glyceryl phosphate) from 2,3-di-O-geranylgeranylglyceryl phosphate (DGGGP) via the hydrogenation of each double bond of the isoprenoid chains. Requires the adjacently encoded ferredoxin MA_1485 as the electron donor. Is also probably able to reduce double bonds of geranyl groups in CDP-2,3-bis-O-(geranylgeranyl)-sn-glycerol and archaetidylserine, thus acting at various stages in the biosynthesis of archaeal membrane lipids. In Methanosarcina acetivorans (strain ATCC 35395 / DSM 2834 / JCM 12185 / C2A), this protein is Digeranylgeranylglycerophospholipid reductase.